We begin with the raw amino-acid sequence, 344 residues long: Endoplasmic reticulum junction formation protein lunapark-1 (344 aa).

The Cytoplasmic portion of the chain corresponds to 1–39 (MGNLFSRTKSPATELERVVLSIEDFKKRLQTISASNSST). The helical transmembrane segment at 40–60 (LYYYYMGVIIILSIAMAHTWL) threads the bilayer. Topologically, residues 61-68 (RFDDPTKT) are lumenal. A helical membrane pass occupies residues 69 to 89 (YVACALVFGATVIVLTGRYII). Residues 90 to 344 (NCFFAWRTNR…ADETAVVEKS (255 aa)) lie on the Cytoplasmic side of the membrane. A coiled-coil region spans residues 116 to 140 (DLVKETLKFKEAKEILDRYEEKTEA). Disordered regions lie at residues 136–155 (EKTE…HQQK) and 171–192 (QKRV…IAFD). Residues 140 to 155 (AGNTPTENSKLIHQQK) show a composition bias toward polar residues. The C4-type; plays a role in ER morphology zinc-finger motif lies at 239–264 (CSICHTHNGMSVPAEYPFISFRCFEC). A disordered region spans residues 275–344 (PHLPITRPPM…ADETAVVEKS (70 aa)). Over residues 312–326 (PNPSTDLTPSASQHG) the composition is skewed to polar residues. Over residues 327–344 (SDSEPEKNADETAVVEKS) the composition is skewed to basic and acidic residues.

The protein belongs to the lunapark family.

It localises to the endoplasmic reticulum membrane. In terms of biological role, plays a role in tubular endoplasmic reticulum network formation and maintenance. May be involved in central nervous system development. Has a presynaptic role in neurotransmission. Likely to operate in synaptogenesis by regulating vesicular transport or localization. Required for correct localization of rab-3 and snb-1. The protein is Endoplasmic reticulum junction formation protein lunapark-1 of Caenorhabditis briggsae.